The sequence spans 319 residues: Ribosomal RNA small subunit methyltransferase H (319 aa).

S-adenosyl-L-methionine-binding positions include 34 to 36 (GGH), Asp-54, Phe-83, Asp-104, and Gln-111.

It belongs to the methyltransferase superfamily. RsmH family.

The protein localises to the cytoplasm. The catalysed reaction is cytidine(1402) in 16S rRNA + S-adenosyl-L-methionine = N(4)-methylcytidine(1402) in 16S rRNA + S-adenosyl-L-homocysteine + H(+). Functionally, specifically methylates the N4 position of cytidine in position 1402 (C1402) of 16S rRNA. The chain is Ribosomal RNA small subunit methyltransferase H from Lactiplantibacillus plantarum (strain ATCC BAA-793 / NCIMB 8826 / WCFS1) (Lactobacillus plantarum).